The following is a 323-amino-acid chain: UPF0612 protein C569.01c (323 aa).

2 coiled-coil regions span residues 27-63 (IKRY…MKYE) and 131-225 (NEMN…DARS).

Belongs to the UPF0612 family.

The sequence is that of UPF0612 protein C569.01c from Schizosaccharomyces pombe (strain 972 / ATCC 24843) (Fission yeast).